Reading from the N-terminus, the 776-residue chain is Lon protease (776 aa).

A Lon N-terminal domain is found at 12–209 (LPIIALRGLW…LVYKFVIKEI (198 aa)). 360–367 (GPPGVGKT) lines the ATP pocket. In terms of domain architecture, Lon proteolytic spans 596-776 (EDTVGVVNGL…VKEILDEVLI (181 aa)). Active-site residues include Ser-683 and Lys-726.

Belongs to the peptidase S16 family. As to quaternary structure, homohexamer. Organized in a ring with a central cavity.

It is found in the cytoplasm. It catalyses the reaction Hydrolysis of proteins in presence of ATP.. In terms of biological role, ATP-dependent serine protease that mediates the selective degradation of mutant and abnormal proteins as well as certain short-lived regulatory proteins. Required for cellular homeostasis and for survival from DNA damage and developmental changes induced by stress. Degrades polypeptides processively to yield small peptide fragments that are 5 to 10 amino acids long. Binds to DNA in a double-stranded, site-specific manner. In Finegoldia magna (strain ATCC 29328 / DSM 20472 / WAL 2508) (Peptostreptococcus magnus), this protein is Lon protease.